The following is a 490-amino-acid chain: Asparagine--tRNA ligase (490 aa).

Belongs to the class-II aminoacyl-tRNA synthetase family. Homodimer.

It is found in the cytoplasm. The enzyme catalyses tRNA(Asn) + L-asparagine + ATP = L-asparaginyl-tRNA(Asn) + AMP + diphosphate + H(+). This is Asparagine--tRNA ligase from Rhodopirellula baltica (strain DSM 10527 / NCIMB 13988 / SH1).